The sequence spans 153 residues: Cell division protein SepF (153 aa).

It belongs to the SepF family. In terms of assembly, homodimer. Interacts with FtsZ.

Its subcellular location is the cytoplasm. Cell division protein that is part of the divisome complex and is recruited early to the Z-ring. Probably stimulates Z-ring formation, perhaps through the cross-linking of FtsZ protofilaments. Its function overlaps with FtsA. The chain is Cell division protein SepF from Clostridium novyi (strain NT).